A 935-amino-acid chain; its full sequence is DNA repair protein rev1 (935 aa).

One can recognise a BRCT domain in the interval 59 to 147; that stretch reads SKSDLFHGLA…KILPWINYRT (89 aa). A compositionally biased stretch (polar residues) spans 162-178; sequence SKPSQPEGNLEDIQTSS. Positions 162–193 are disordered; sequence SKPSQPEGNLEDIQTSSQEEEHDNEKDKTKES. The span at 184–193 shows a compositional bias: basic and acidic residues; that stretch reads DNEKDKTKES. The interval 235-245 is interaction with target DNA; sequence FFSSSRLHHLS. DCTP contacts are provided by residues Arg-240 and 283–287; that span reads DFDCF. The UmuC domain occupies 279–460; it reads LLHVDFDCFF…LSVQDLPGVG (182 aa). Residues Asp-283 and Phe-284 each contribute to the Mg(2+) site. Residues 310–312 form an interaction with target DNA region; sequence IKN. DCTP is bound by residues 317–323, Asn-329, and Asp-378; that span reads SCNYEAR. The Mg(2+) site is built by Asp-378 and Glu-379. 2 interaction with target DNA regions span residues 460 to 463 and 517 to 525; these read GSSQ and RRSISVDVN.

This sequence belongs to the DNA polymerase type-Y family. It depends on Mg(2+) as a cofactor.

It localises to the nucleus. The protein resides in the nucleolus. Its subcellular location is the mitochondrion. The protein localises to the cytoplasm. It is found in the cytoskeleton. It localises to the spindle. Deoxycytidyl transferase involved in DNA repair. Transfers a dCMP residue from dCTP to the 3'-end of a DNA primer in a template-dependent reaction. May assist in the first step in the bypass of abasic lesions by the insertion of a nucleotide opposite the lesion. Required for normal induction of mutations by physical and chemical agents. Involved in mitochondrial DNA mutagenesis. This is DNA repair protein rev1 from Schizosaccharomyces pombe (strain 972 / ATCC 24843) (Fission yeast).